The primary structure comprises 341 residues: Cysteine-rich with EGF-like domain protein 2 (341 aa).

The N-terminal stretch at 1–24 (MLLSCSIFRLFCIILLLQLGSIYT) is a signal peptide. One can recognise an EGF-like domain in the interval 136 to 178 (DCNTCIGGADRPCHGNGKCDGDGTRAGNGKCSCDEGYDGEFCL). Cystine bridges form between C140/C154, C148/C166, and C168/C177. N190 carries an N-linked (GlcNAc...) asparagine glycan. 2 FU repeats span residues 193–248 (FFLC…DQYC) and 254–308 (SFSC…NQHC). Residues 291–317 (DIDECTEDPASCSDNQHCLNTDGSFSC) enclose the EGF-like 2; calcium-binding; truncated domain.

This sequence belongs to the CRELD family.

Its subcellular location is the secreted. The protein resides in the endoplasmic reticulum. Functionally, possible role in neuronal acetylcholine receptor transport. This is Cysteine-rich with EGF-like domain protein 2 (creld2) from Danio rerio (Zebrafish).